Reading from the N-terminus, the 318-residue chain is ZAR1-like protein (318 aa).

The disordered stretch occupies residues 149–211 (LSDPPEAGQP…PVDSSQPLGR (63 aa)). Over residues 155 to 169 (AGQPPPPLPPPSPPP) the composition is skewed to pro residues. The 3CxxC-type zinc-finger motif lies at 219–304 (PKYGYFHCKD…QELCGRCKDK (86 aa)).

This sequence belongs to the ZAR1 family. In terms of assembly, interacts with YBX2.

It localises to the cytoplasm. The protein localises to the cytoplasmic ribonucleoprotein granule. Functionally, mRNA-binding protein required for maternal mRNA storage, translation and degradation during oocyte maturation. Probably promotes formation of some phase-separated membraneless compartment that stores maternal mRNAs in oocytes: acts by undergoing liquid-liquid phase separation upon binding to maternal mRNAs. Binds to the 3'-UTR of maternal mRNAs, inhibiting their translation. In Bos taurus (Bovine), this protein is ZAR1-like protein (ZAR1L).